The following is a 106-amino-acid chain: Flagellar transcriptional regulator FlhD (106 aa).

The protein belongs to the FlhD family. In terms of assembly, homodimer; disulfide-linked. Forms a heterohexamer composed of two FlhC and four FlhD subunits. Each FlhC binds a FlhD dimer, forming a heterotrimer, and a hexamer assembles by dimerization of two heterotrimers.

The protein resides in the cytoplasm. Its function is as follows. Functions in complex with FlhC as a master transcriptional regulator that regulates transcription of several flagellar and non-flagellar operons by binding to their promoter region. Activates expression of class 2 flagellar genes, including fliA, which is a flagellum-specific sigma factor that turns on the class 3 genes. Also regulates genes whose products function in a variety of physiological pathways. The sequence is that of Flagellar transcriptional regulator FlhD from Burkholderia mallei (strain SAVP1).